The primary structure comprises 565 residues: Proline--tRNA ligase (565 aa).

This sequence belongs to the class-II aminoacyl-tRNA synthetase family. ProS type 1 subfamily. In terms of assembly, homodimer.

Its subcellular location is the cytoplasm. The catalysed reaction is tRNA(Pro) + L-proline + ATP = L-prolyl-tRNA(Pro) + AMP + diphosphate. Functionally, catalyzes the attachment of proline to tRNA(Pro) in a two-step reaction: proline is first activated by ATP to form Pro-AMP and then transferred to the acceptor end of tRNA(Pro). As ProRS can inadvertently accommodate and process non-cognate amino acids such as alanine and cysteine, to avoid such errors it has two additional distinct editing activities against alanine. One activity is designated as 'pretransfer' editing and involves the tRNA(Pro)-independent hydrolysis of activated Ala-AMP. The other activity is designated 'posttransfer' editing and involves deacylation of mischarged Ala-tRNA(Pro). The misacylated Cys-tRNA(Pro) is not edited by ProRS. This is Proline--tRNA ligase from Hydrogenobaculum sp. (strain Y04AAS1).